Consider the following 353-residue polypeptide: tRNA N6-adenosine threonylcarbamoyltransferase (353 aa).

Fe cation contacts are provided by histidine 109 and histidine 113. Residues 136-140 (TVSGG), aspartate 169, glycine 182, aspartate 186, and asparagine 284 each bind substrate. Residue aspartate 312 coordinates Fe cation.

It belongs to the KAE1 / TsaD family. Fe(2+) serves as cofactor.

It is found in the cytoplasm. It catalyses the reaction L-threonylcarbamoyladenylate + adenosine(37) in tRNA = N(6)-L-threonylcarbamoyladenosine(37) in tRNA + AMP + H(+). In terms of biological role, required for the formation of a threonylcarbamoyl group on adenosine at position 37 (t(6)A37) in tRNAs that read codons beginning with adenine. Is involved in the transfer of the threonylcarbamoyl moiety of threonylcarbamoyl-AMP (TC-AMP) to the N6 group of A37, together with TsaE and TsaB. TsaD likely plays a direct catalytic role in this reaction. In Chlorobaculum tepidum (strain ATCC 49652 / DSM 12025 / NBRC 103806 / TLS) (Chlorobium tepidum), this protein is tRNA N6-adenosine threonylcarbamoyltransferase.